Reading from the N-terminus, the 315-residue chain is Cytochrome bo(3) ubiquinol oxidase subunit 2 (315 aa).

An N-terminal signal peptide occupies residues Met-1 to Gly-24. Cys-25 is lipidated: N-palmitoyl cysteine. Cys-25 carries the S-diacylglycerol cysteine lipid modification. The Periplasmic segment spans residues Cys-25–Leu-50. The helical transmembrane segment at Met-51–Lys-68 threads the bilayer. At Tyr-69–Val-92 the chain is on the cytoplasmic side. The helical transmembrane segment at Trp-93–Thr-111 threads the bilayer. Residues His-112 to His-315 are Periplasmic-facing. A disordered region spans residues Met-288 to His-315. A compositionally biased stretch (basic and acidic residues) spans Glu-294–His-315.

This sequence belongs to the cytochrome c oxidase subunit 2 family. As to quaternary structure, heterooctamer of two A chains, two B chains, two C chains and two D chains.

The protein resides in the cell inner membrane. Functionally, cytochrome bo(3) ubiquinol terminal oxidase is the component of the aerobic respiratory chain of E.coli that predominates when cells are grown at high aeration. Has proton pump activity across the membrane in addition to electron transfer, pumping 2 protons/electron. This is Cytochrome bo(3) ubiquinol oxidase subunit 2 (cyoA) from Escherichia coli O6:H1 (strain CFT073 / ATCC 700928 / UPEC).